Consider the following 2101-residue polypeptide: General transcription factor 3C polypeptide 1 (2101 aa).

Residues 473–487 (GEEAFLSDSESEEES) are compositionally biased toward acidic residues. Disordered stretches follow at residues 473–574 (GEEA…MDSH) and 588–609 (NPKE…DKPH). Positions 492 to 503 (GKRRGRGSRGHA) are enriched in basic residues. The span at 504–513 (RASGDAGSGS) shows a compositional bias: low complexity. Residue Lys534 forms a Glycyl lysine isopeptide (Lys-Gly) (interchain with G-Cter in SUMO2) linkage. Ser667 bears the Phosphoserine mark. 2 disordered regions span residues 718–772 (STAN…EKMG) and 820–864 (GEQP…SSWE). Residues 747 to 759 (RSANSDPNTSSKP) are compositionally biased toward polar residues. Composition is skewed to basic and acidic residues over residues 760-771 (ESTRVKKTDEKM) and 826-836 (HSERKTGKQES). Glycyl lysine isopeptide (Lys-Gly) (interchain with G-Cter in SUMO2) cross-links involve residues Lys770 and Lys833. Ser1063 is subject to Phosphoserine. The span at 1186 to 1196 (EEQFELDREPT) shows a compositional bias: basic and acidic residues. Disordered regions lie at residues 1186-1239 (EEQF…KKLR), 1598-1627 (KSLG…QGVE), and 1822-1923 (DTKA…QENQ). At Thr1196 the chain carries Phosphothreonine. Residues 1199 to 1215 (RNRKVRGGKSQKRKRLK) are compositionally biased toward basic residues. The span at 1229–1239 (EHPEAKSKKLR) shows a compositional bias: basic and acidic residues. The span at 1606–1617 (LDDDEEEEDLDE) shows a compositional bias: acidic residues. The span at 1822-1831 (DTKASGDDSQ) shows a compositional bias: basic and acidic residues. Ser1854 and Ser1890 each carry phosphoserine. The segment covering 1900–1910 (EAQAPAQLAAP) has biased composition (low complexity).

The protein belongs to the TFIIIC subunit 1 family. In terms of assembly, part of the TFIIIC subcomplex TFIIIC2, consisting of six subunits, GTF3C1, GTF3C2, GTF3C3, GTF3C4, GTF3C5 and GTF3C6. Interacts with IGHMBP2. Interacts with MAF1.

It is found in the nucleus. Required for RNA polymerase III-mediated transcription. Component of TFIIIC that initiates transcription complex assembly on tRNA and is required for transcription of 5S rRNA and other stable nuclear and cytoplasmic RNAs. Binds to the box B promoter element. This is General transcription factor 3C polypeptide 1 (Gtf3c1) from Mus musculus (Mouse).